The sequence spans 397 residues: F-box protein At4g11590 (397 aa).

Residues 24–70 (EKNFNDVPLDVAIEIFMRLPVKSVARFLLLSKFWAEIIRSRHFITSF) enclose the F-box domain.

Part of a SCF (ASK-cullin-F-box) protein ligase complex. Interacts with ASK16.

The protein resides in the nucleus. It participates in protein modification; protein ubiquitination. Its function is as follows. Component of SCF(ASK-cullin-F-box) E3 ubiquitin ligase complexes, which may mediate the ubiquitination and subsequent proteasomal degradation of target proteins. This chain is F-box protein At4g11590, found in Arabidopsis thaliana (Mouse-ear cress).